A 1155-amino-acid chain; its full sequence is MSHGTKYRDALLFSLTLYDVNTGKSRLKELYAAVPGIRKSLLGVHAKRFGEQYHHLQRRRSVSSRGGSLRGSMDSLNDSGQNGAEDVIGVEDEEEAQKFRGKRTSISLDPAAAGEVMFTIEDGACFPSGGLANTHFQQRVINVSNAPPVSLKREKSGEWEIKQGSGGLVSCVDPIMSVNQENMWLANLGMNIDKKKMLRSTELLNVTDDSAPLAPATNTLGLPLMRQALADVLFHVIADDDIKEQNEDEQSRNVRWGHSSVEAGGVAPSQPWEEMSLLGVLNQYNRSNYKLNPVVVQEQDYNVYYGGISNGLLWPALHNLPEYIVADYDDPKVLYEHWCAYVRVNYQFAIDAVRNSRPQDFIWIHDYHLMLTGMIMQSLDSSLEIGFFLHIPFLPPDNFFTKYRLCAFPIMRGLLRFTKVGFQTHRDRAKFVELVGIHLPTARVTYDEKMDIHTVTYQGWSCSLGVFPVSIKNEDFLKVAQSAETIKKADDIRKEILGETPVDSARLLFSVERFDYTKGIKEKLLAYRRYFERHPDRIGKDVLYQVAVTNRRSVDTYRMYQDECIQMAEDINREFATDEYPNWKPLIFRTDGLQRADLVAHYLAMDVGVVTPKKDGMNLVAKEMLVCNPSAGLVLSTGAGSEIQFTMAGLHPDDGDKCYHRVVDVYDADHYADAFYEAAVEPEGERAAHGQRLNEFIMNNDIERWSTAFLDPGWSHLVIRQSEIKDLDDFYSLMMRTRDVRRQIVERVLKGIPIRSHFSISLSNTKESLLLACQPGTRTLHLKPSLEEDEQTEPAHFDIANELDEFEKDLNFMKFIQSDDVYNVEQFINSLQEYHPVSADKFRDEVIELGDVLTEADHFNFFFTDRDGTLKSYSCSYPASIQPAYSGVIQAQFARRCAQTCAIVTTAPLMRIGVLDVSTIPEGYYYFGASAGREWFIDPANKFKDQSIPEEDLELLERVFAAISDLLEEPKFKHFTWVGSGLQKHYGHITIAHQDAFNSVPRHQVRAIDQKIKDIIHRIDPDQHTLKVKETETDIKIFLKSESGEIFDKGQGIRLLVEHMKCDISNGTILVCGDSSTDLPMLQACLEANPSGVYTVWVTRSDELKTTVRELCERFGNKNFVFVSCPEVLLGGMAQATIREISIGRPGPRASHDSE.

Residues leucine 56 to glutamate 94 form a disordered region. Residues serine 63–serine 72 show a composition bias toward low complexity.

It in the N-terminal section; belongs to the glycosyltransferase 20 family. The protein in the C-terminal section; belongs to the gob-1 trehalose phosphatase family.

The catalysed reaction is D-glucose 6-phosphate + UDP-alpha-D-glucose = alpha,alpha-trehalose 6-phosphate + UDP + H(+). Catalyzes the production of trehalose from glucose-6-phosphate and UDP-alpha-D-glucose in a 2 step process. This Aphelenchoides avenae (Mycophagous nematode worm) protein is Alpha,alpha-trehalose-phosphate synthase [UDP-forming] 1 (tps-1).